The sequence spans 295 residues: Methionine aminopeptidase (295 aa).

His62 serves as a coordination point for substrate. Residues Asp82, Asp93, and His153 each contribute to the a divalent metal cation site. His161 is a substrate binding site. 2 residues coordinate a divalent metal cation: Glu187 and Glu280.

The protein belongs to the peptidase M24A family. Methionine aminopeptidase archaeal type 2 subfamily. Monomer. Co(2+) is required as a cofactor. The cofactor is Zn(2+). It depends on Mn(2+) as a cofactor. Requires Fe(2+) as cofactor.

It catalyses the reaction Release of N-terminal amino acids, preferentially methionine, from peptides and arylamides.. Removes the N-terminal methionine from nascent proteins. The N-terminal methionine is often cleaved when the second residue in the primary sequence is small and uncharged (Met-Ala-, Cys, Gly, Pro, Ser, Thr, or Val). The chain is Methionine aminopeptidase from Pyrococcus abyssi (strain GE5 / Orsay).